Reading from the N-terminus, the 389-residue chain is D(-)-tartrate dehydratase (389 aa).

Residues Asn21, Asn55, Lys102, Tyr156, Lys182, Lys182–Lys184, Asp213–Asn215, Glu239, Glu265, His322, and Glu341–Tyr343 contribute to the substrate site. The active-site acceptor is the Lys184. Residues Asp213, Glu239, and Glu265 each coordinate Mg(2+). The Proton donor/acceptor role is filled by His322.

The protein belongs to the mandelate racemase/muconate lactonizing enzyme family. In terms of assembly, homooctamer; tetramer of dimers. Mg(2+) serves as cofactor.

It catalyses the reaction (S,S)-tartrate = oxaloacetate + H2O. Catalyzes the dehydration of D-tartrate to oxaloacetate. The sequence is that of D(-)-tartrate dehydratase (tarD) from Bradyrhizobium diazoefficiens (strain JCM 10833 / BCRC 13528 / IAM 13628 / NBRC 14792 / USDA 110).